The primary structure comprises 89 residues: Small ribosomal subunit protein uS19 (89 aa).

This sequence belongs to the universal ribosomal protein uS19 family.

Functionally, protein S19 forms a complex with S13 that binds strongly to the 16S ribosomal RNA. The sequence is that of Small ribosomal subunit protein uS19 from Ruthia magnifica subsp. Calyptogena magnifica.